A 260-amino-acid chain; its full sequence is Adenosylcobinamide-GDP ribazoletransferase (260 aa).

7 helical membrane passes run 42–62 (PLAG…ANAI), 64–84 (LPPL…TGAL), 117–137 (FAAL…MAII), 144–164 (YALL…LAFW), 192–212 (GLGL…VALI), 214–234 (ALVL…AKIG), and 240–260 (TLGA…VMAL).

The protein belongs to the CobS family. It depends on Mg(2+) as a cofactor.

The protein resides in the cell inner membrane. The enzyme catalyses alpha-ribazole + adenosylcob(III)inamide-GDP = adenosylcob(III)alamin + GMP + H(+). It carries out the reaction alpha-ribazole 5'-phosphate + adenosylcob(III)inamide-GDP = adenosylcob(III)alamin 5'-phosphate + GMP + H(+). It participates in cofactor biosynthesis; adenosylcobalamin biosynthesis; adenosylcobalamin from cob(II)yrinate a,c-diamide: step 7/7. Its function is as follows. Joins adenosylcobinamide-GDP and alpha-ribazole to generate adenosylcobalamin (Ado-cobalamin). Also synthesizes adenosylcobalamin 5'-phosphate from adenosylcobinamide-GDP and alpha-ribazole 5'-phosphate. The sequence is that of Adenosylcobinamide-GDP ribazoletransferase from Brucella ovis (strain ATCC 25840 / 63/290 / NCTC 10512).